Reading from the N-terminus, the 191-residue chain is Leucyl/phenylalanyl-tRNA--protein transferase (191 aa).

This sequence belongs to the L/F-transferase family.

Its subcellular location is the cytoplasm. It carries out the reaction N-terminal L-lysyl-[protein] + L-leucyl-tRNA(Leu) = N-terminal L-leucyl-L-lysyl-[protein] + tRNA(Leu) + H(+). The catalysed reaction is N-terminal L-arginyl-[protein] + L-leucyl-tRNA(Leu) = N-terminal L-leucyl-L-arginyl-[protein] + tRNA(Leu) + H(+). The enzyme catalyses L-phenylalanyl-tRNA(Phe) + an N-terminal L-alpha-aminoacyl-[protein] = an N-terminal L-phenylalanyl-L-alpha-aminoacyl-[protein] + tRNA(Phe). Functions in the N-end rule pathway of protein degradation where it conjugates Leu, Phe and, less efficiently, Met from aminoacyl-tRNAs to the N-termini of proteins containing an N-terminal arginine or lysine. This chain is Leucyl/phenylalanyl-tRNA--protein transferase, found in Nostoc sp. (strain PCC 7120 / SAG 25.82 / UTEX 2576).